The sequence spans 176 residues: Probable inosine/xanthosine triphosphatase (176 aa).

Mg(2+) is bound at residue D36.

The protein belongs to the YjjX NTPase family. As to quaternary structure, homodimer. It depends on Mg(2+) as a cofactor. The cofactor is Mn(2+).

It catalyses the reaction XTP + H2O = XDP + phosphate + H(+). The catalysed reaction is ITP + H2O = IDP + phosphate + H(+). Its function is as follows. Phosphatase that hydrolyzes non-canonical purine nucleotides such as XTP and ITP to their respective diphosphate derivatives. Probably excludes non-canonical purines from DNA/RNA precursor pool, thus preventing their incorporation into DNA/RNA and avoiding chromosomal lesions. In Saccharolobus islandicus (strain M.16.4 / Kamchatka #3) (Sulfolobus islandicus), this protein is Probable inosine/xanthosine triphosphatase.